The sequence spans 407 residues: Ornithine cyclodeaminase (407 aa).

NAD(+) is bound by residues Asn-233, Ala-234, Asp-312, Thr-344, Met-345, Leu-346, His-347, Asp-365, Asp-388, and Val-389.

It belongs to the AgrE/ArgZ ornithine cyclodeaminase family. NAD(+) serves as cofactor.

The enzyme catalyses L-ornithine = L-proline + NH4(+). Its function is as follows. Catalyzes the conversion of ornithine to proline, with the release of ammonia. This Archaeoglobus fulgidus (strain ATCC 49558 / DSM 4304 / JCM 9628 / NBRC 100126 / VC-16) protein is Ornithine cyclodeaminase.